The primary structure comprises 743 residues: Mitochondrial exoribonuclease DSS-1 (743 aa).

Residues 1-67 constitute a mitochondrion transit peptide; sequence MTPRRVAKLV…KELLHLQRSL (67 aa). Residues 186 to 542 enclose the RNB domain; it reads THNPAYAIDS…VHHQLKVWLW (357 aa). The tract at residues 320–357 is disordered; sequence VGNQHHHTERESTQASPAKREEGKKGMVASGGTSSCRP. A compositionally biased stretch (basic and acidic residues) spans 325–344; the sequence is HHTERESTQASPAKREEGKK.

It belongs to the RNR ribonuclease family. As to quaternary structure, component of the mitochondrial 3' processome (MPsome) complex composed at least of terminal uridylyltransferase KRET1/TUT1, 3'-5' exonuclease DSS1, MPSS1, MPSS2 and MPSS3. Within the complex, interacts with KRET1 and MPSS2. Component of the mitochondrial degradosome complex composed at least of 3'-5' exonuclease DSS1 and helicase SUV3. Within the complex, interacts with helicase SUV3.

The protein localises to the mitochondrion. The catalysed reaction is Exonucleolytic cleavage in the 3'- to 5'-direction to yield nucleoside 5'-phosphates.. Its function is as follows. 3'-5'exoribonuclease which is involved in the post-transcriptional processing, editing and degradation of mitochondrial RNAs, including mRNAs, rRNAs and guided RNAs (gRNA). As part of the mitochondrial 3' processome (MPsome), involved in the maturation of guided RNA (gRNA) precursors by catalyzing the processive 3'-5' degradation of uridylated gRNA precursors. Plays a role in the degradation of 12S rRNA processing intermediates and maturation by-products. This is Mitochondrial exoribonuclease DSS-1 from Trypanosoma brucei brucei.